Consider the following 146-residue polypeptide: MAHSFLDEQREETRLIIDELLEDGSDPEALYTIEHHLSADDFDTLEKVAVEAFKLGYEVTDAEELEVEGGEKLMCCDAVSEIALQAELIDAQVEQLFTLTQRLEVNYDGWGTYFEDPDGEEEEGDEFDQDDEDGPADRDEVPATRH.

Residues 110 to 146 (WGTYFEDPDGEEEEGDEFDQDDEDGPADRDEVPATRH) form a disordered region. The span at 115–134 (EDPDGEEEEGDEFDQDDEDG) shows a compositional bias: acidic residues. Positions 135-146 (PADRDEVPATRH) are enriched in basic and acidic residues.

Belongs to the RraB family. In terms of assembly, interacts with the C-terminal region of Rne.

It localises to the cytoplasm. Functionally, globally modulates RNA abundance by binding to RNase E (Rne) and regulating its endonucleolytic activity. Can modulate Rne action in a substrate-dependent manner by altering the composition of the degradosome. The sequence is that of Regulator of ribonuclease activity B from Sodalis glossinidius (strain morsitans).